We begin with the raw amino-acid sequence, 57 residues long: uncharacterized protein (57 aa).

Residues His31–Phe57 are disordered. The span at Gln33–Phe57 shows a compositional bias: polar residues.

This is an uncharacterized protein from Invertebrate iridescent virus 6 (IIV-6).